We begin with the raw amino-acid sequence, 57 residues long: DNA-directed RNA polymerase subunit Rpo6 (57 aa).

It belongs to the archaeal Rpo6/eukaryotic RPB6 RNA polymerase subunit family. As to quaternary structure, part of the RNA polymerase complex.

It localises to the cytoplasm. The enzyme catalyses RNA(n) + a ribonucleoside 5'-triphosphate = RNA(n+1) + diphosphate. Functionally, DNA-dependent RNA polymerase (RNAP) catalyzes the transcription of DNA into RNA using the four ribonucleoside triphosphates as substrates. In Pyrococcus abyssi (strain GE5 / Orsay), this protein is DNA-directed RNA polymerase subunit Rpo6.